Consider the following 185-residue polypeptide: Ribosome-recycling factor (185 aa).

The protein belongs to the RRF family.

It localises to the cytoplasm. In terms of biological role, responsible for the release of ribosomes from messenger RNA at the termination of protein biosynthesis. May increase the efficiency of translation by recycling ribosomes from one round of translation to another. This is Ribosome-recycling factor from Geobacillus sp. (strain WCH70).